The following is a 473-amino-acid chain: Keratin, type I cytoskeletal 16 (473 aa).

Residues 1 to 116 (MTTCSRQFTS…AGGDGLLVGS (116 aa)) are head. Positions 117–152 (EKVTMQNLNDRLASYLDKVRALEEANADLEVKIRDW) are coil 1A. One can recognise an IF rod domain in the interval 117–428 (EKVTMQNLND…RLLEGEDAHL (312 aa)). The interval 153–170 (YQRQRPSEIKDYSPYFKT) is linker 1. The interval 171–262 (IEDLRNKIIA…KNHEEEMLAL (92 aa)) is coil 1B. Positions 263-285 (RGQTGGDVNVEMDAAPGVDLSRI) are linker 12. Residues 286 to 424 (LNEMRDQYEQ…ATYRRLLEGE (139 aa)) form a coil 2 region. The interval 425–473 (DAHLSSQQASGQSYSSREVFTSSSSSSSRQTRPILKEQSSSSFSQGQSS) is tail. The segment at 428 to 473 (LSSQQASGQSYSSREVFTSSSSSSSRQTRPILKEQSSSSFSQGQSS) is disordered. Composition is skewed to low complexity over residues 429–452 (SSQQASGQSYSSREVFTSSSSSSS) and 462–473 (QSSSSFSQGQSS).

It belongs to the intermediate filament family. As to quaternary structure, heterodimer of a type I and a type II keratin. KRT16 associates with KRT6 isomers (KRT6A or KRT6B). Interacts with TCHP. Interacts with TRADD. Expressed in the corneal epithelium (at protein level).

Its function is as follows. Epidermis-specific type I keratin that plays a key role in skin. Acts as a regulator of innate immunity in response to skin barrier breach: required for some inflammatory checkpoint for the skin barrier maintenance. This chain is Keratin, type I cytoskeletal 16 (KRT16), found in Homo sapiens (Human).